Consider the following 657-residue polypeptide: MGEFKIQSRFKPTGDQPQAIDKLVNSIKSNNRAQTLLGVTGSGKTFTMANVIEKLQRPTIILAHNKTLAAQLCSEFKEFFPDNIVEYFVSYYDYYQPEAYVPQTDTFIEKDASINDEIDKLRHSATSALFERRDVIIVASVSCIYGLGNPDEYKKLTISLRTGMEKERDEVIKKLIEIQYERNDIDFSRGTFRVRGDSLDIIPASYSNKGIRIEFFGDEIDRIREFDVLTGSILGERNHVAITPASHFATSRETVDKAIGIIEGELEERLRELNAQDKLLEAQRLRQRTNFDIEMIKEMGYCSGIENYSRILDGRASGTPPKTLIDYFPEDFLMFIDESHVTLPQVRAMYAGDRSRKNTLVDYGFRLPCAYDNRPLKFEEFEKKINQVVFVSATPSAYEIDNSEEIAEQIIRPTGLLDPEIIIRPIKGQIDDLYGEINKTIECGFRILITTLTKRMSEDLTKYLIELGVKTTYMHSDIDTIERMKIIRDLRLGEYDVLVGINLLREGLDIPEVALVAILDADKEGFLRSETSLIQTIGRAARNSESKVIMYADNITKSMDKAMKETERRRAIQKDYNERHGIVPTTIIKDVRDIIEATKVAEEVEEYKAADKKKLTKKEKDKLIKDLTEEMLLAAKNLQFERAAELRDIINEIKDGK.

A Helicase ATP-binding domain is found at 25–182 (NSIKSNNRAQ…KKLIEIQYER (158 aa)). 38-45 (GVTGSGKT) contributes to the ATP binding site. A Beta-hairpin motif is present at residues 91–114 (YYDYYQPEAYVPQTDTFIEKDASI). Positions 429–595 (QIDDLYGEIN…TIIKDVRDII (167 aa)) constitute a Helicase C-terminal domain. Residues 621 to 656 (DKLIKDLTEEMLLAAKNLQFERAAELRDIINEIKDG) form the UVR domain.

This sequence belongs to the UvrB family. In terms of assembly, forms a heterotetramer with UvrA during the search for lesions. Interacts with UvrC in an incision complex.

It localises to the cytoplasm. Functionally, the UvrABC repair system catalyzes the recognition and processing of DNA lesions. A damage recognition complex composed of 2 UvrA and 2 UvrB subunits scans DNA for abnormalities. Upon binding of the UvrA(2)B(2) complex to a putative damaged site, the DNA wraps around one UvrB monomer. DNA wrap is dependent on ATP binding by UvrB and probably causes local melting of the DNA helix, facilitating insertion of UvrB beta-hairpin between the DNA strands. Then UvrB probes one DNA strand for the presence of a lesion. If a lesion is found the UvrA subunits dissociate and the UvrB-DNA preincision complex is formed. This complex is subsequently bound by UvrC and the second UvrB is released. If no lesion is found, the DNA wraps around the other UvrB subunit that will check the other stand for damage. This chain is UvrABC system protein B, found in Clostridium beijerinckii (strain ATCC 51743 / NCIMB 8052) (Clostridium acetobutylicum).